The sequence spans 463 residues: Mitochondrial distribution and morphology protein 10 (463 aa).

The protein belongs to the MDM10 family. Component of the ER-mitochondria encounter structure (ERMES) or MDM complex, composed of MMM1, MDM10, MDM12 and MDM34. Associates with the mitochondrial outer membrane sorting assembly machinery SAM(core) complex.

The protein resides in the mitochondrion outer membrane. Component of the ERMES/MDM complex, which serves as a molecular tether to connect the endoplasmic reticulum and mitochondria. Components of this complex are involved in the control of mitochondrial shape and protein biogenesis and may function in phospholipid exchange. MDM10 is involved in the late assembly steps of the general translocase of the mitochondrial outer membrane (TOM complex). Functions in the TOM40-specific route of the assembly of outer membrane beta-barrel proteins, including the association of TOM40 with the receptor TOM22 and small TOM proteins. Can associate with the SAM(core) complex as well as the MDM12-MMM1 complex, both involved in late steps of the major beta-barrel assembly pathway, that is responsible for biogenesis of all outer membrane beta-barrel proteins. May act as a switch that shuttles between both complexes and channels precursor proteins into the TOM40-specific pathway. Plays a role in mitochondrial morphology and in the inheritance of mitochondria. The protein is Mitochondrial distribution and morphology protein 10 of Candida dubliniensis (strain CD36 / ATCC MYA-646 / CBS 7987 / NCPF 3949 / NRRL Y-17841) (Yeast).